Consider the following 412-residue polypeptide: Serine hydroxymethyltransferase (412 aa).

(6S)-5,6,7,8-tetrahydrofolate contacts are provided by residues L121 and 125-127; that span reads GHL. K230 carries the post-translational modification N6-(pyridoxal phosphate)lysine. Residue 353-355 participates in (6S)-5,6,7,8-tetrahydrofolate binding; the sequence is TPF.

Belongs to the SHMT family. Homodimer. Pyridoxal 5'-phosphate is required as a cofactor.

It is found in the cytoplasm. The catalysed reaction is (6R)-5,10-methylene-5,6,7,8-tetrahydrofolate + glycine + H2O = (6S)-5,6,7,8-tetrahydrofolate + L-serine. It functions in the pathway one-carbon metabolism; tetrahydrofolate interconversion. It participates in amino-acid biosynthesis; glycine biosynthesis; glycine from L-serine: step 1/1. Catalyzes the reversible interconversion of serine and glycine with tetrahydrofolate (THF) serving as the one-carbon carrier. This reaction serves as the major source of one-carbon groups required for the biosynthesis of purines, thymidylate, methionine, and other important biomolecules. Also exhibits THF-independent aldolase activity toward beta-hydroxyamino acids, producing glycine and aldehydes, via a retro-aldol mechanism. In Finegoldia magna (strain ATCC 29328 / DSM 20472 / WAL 2508) (Peptostreptococcus magnus), this protein is Serine hydroxymethyltransferase.